A 464-amino-acid chain; its full sequence is Methionine aminopeptidase 2 (464 aa).

The interval 1–86 (MGSKTPGNHR…RKKKKKNTKE (86 aa)) is disordered. Residues 43 to 54 (GESEGGEDEDDD) show a composition bias toward acidic residues. Residues 72–83 (KRNKRRKKKKKN) show a composition bias toward basic residues. His-216 contributes to the substrate binding site. A divalent metal cation-binding residues include Asp-237, Asp-248, and His-317. His-325 is a substrate binding site. Positions 350 and 445 each coordinate a divalent metal cation.

The protein belongs to the peptidase M24A family. Methionine aminopeptidase eukaryotic type 2 subfamily. Co(2+) is required as a cofactor. The cofactor is Zn(2+). Mn(2+) serves as cofactor. It depends on Fe(2+) as a cofactor.

The protein resides in the cytoplasm. The enzyme catalyses Release of N-terminal amino acids, preferentially methionine, from peptides and arylamides.. Its function is as follows. Cotranslationally removes the N-terminal methionine from nascent proteins. The N-terminal methionine is often cleaved when the second residue in the primary sequence is small and uncharged (Met-Ala-, Cys, Gly, Pro, Ser, Thr, or Val). This Ajellomyces capsulatus (strain NAm1 / WU24) (Darling's disease fungus) protein is Methionine aminopeptidase 2.